Reading from the N-terminus, the 261-residue chain is Type II restriction enzyme Sau96I (261 aa).

Monomer.

The catalysed reaction is Endonucleolytic cleavage of DNA to give specific double-stranded fragments with terminal 5'-phosphates.. Its function is as follows. A P subtype restriction enzyme that recognizes the double-stranded sequence 5'-GGNCC-3' and cleaves after G-1. This chain is Type II restriction enzyme Sau96I, found in Staphylococcus aureus.